A 410-amino-acid chain; its full sequence is Peptidase T (410 aa).

Histidine 77 is a Zn(2+) binding site. Residue aspartate 79 is part of the active site. Aspartate 140 is a Zn(2+) binding site. Residue glutamate 174 is the Proton acceptor of the active site. Residues glutamate 175, aspartate 197, and histidine 379 each coordinate Zn(2+).

The protein belongs to the peptidase M20B family. Requires Zn(2+) as cofactor.

The protein resides in the cytoplasm. The catalysed reaction is Release of the N-terminal residue from a tripeptide.. In terms of biological role, cleaves the N-terminal amino acid of tripeptides. The chain is Peptidase T from Desulfitobacterium hafniense (strain DSM 10664 / DCB-2).